Here is a 237-residue protein sequence, read N- to C-terminus: Orotidine 5'-phosphate decarboxylase (237 aa).

Residues D11, K34, 61–70 (DLKLHDIPNT), T124, R186, Q195, G215, and R216 contribute to the substrate site. Residue K63 is the Proton donor of the active site.

This sequence belongs to the OMP decarboxylase family. Type 1 subfamily. As to quaternary structure, homodimer.

It catalyses the reaction orotidine 5'-phosphate + H(+) = UMP + CO2. It participates in pyrimidine metabolism; UMP biosynthesis via de novo pathway; UMP from orotate: step 2/2. Functionally, catalyzes the decarboxylation of orotidine 5'-monophosphate (OMP) to uridine 5'-monophosphate (UMP). This chain is Orotidine 5'-phosphate decarboxylase, found in Lactococcus lactis subsp. cremoris (strain SK11).